The primary structure comprises 258 residues: Indole-3-glycerol phosphate synthase (258 aa).

The protein belongs to the TrpC family.

The enzyme catalyses 1-(2-carboxyphenylamino)-1-deoxy-D-ribulose 5-phosphate + H(+) = (1S,2R)-1-C-(indol-3-yl)glycerol 3-phosphate + CO2 + H2O. It functions in the pathway amino-acid biosynthesis; L-tryptophan biosynthesis; L-tryptophan from chorismate: step 4/5. This Geobacillus thermodenitrificans (strain NG80-2) protein is Indole-3-glycerol phosphate synthase.